We begin with the raw amino-acid sequence, 179 residues long: Interleukin-22 (179 aa).

An N-terminal signal peptide occupies residues 1-33; sequence MAVLQKSMSFSLMGTLAASCLLLIALWAQEANA. Cystine bridges form between Cys-40/Cys-132 and Cys-89/Cys-178. Asn-54, Asn-68, and Asn-97 each carry an N-linked (GlcNAc...) asparagine glycan.

This sequence belongs to the IL-10 family.

Its subcellular location is the secreted. Its function is as follows. Cytokine that plays a critical role in modulating tissue responses during inflammation. Plays an essential role in the regeneration of epithelial cells to maintain barrier function after injury and for the prevention of further tissue damage. Unlike most of the cytokines, has no effect on immune cells. Signals through a heterodimeric receptor composed of two subunits, the specific receptor IL22RA1 which is present on non-immune cells in many organs and the shared subunit IL10RB. Ligation of IL22RA1 with IL22 induces activation of the tyrosine kinases JAK1 and TYK2, which in turn activates STAT3. In turn, promotes cell survival and proliferation through STAT3, ERK1/2 and PI3K/AKT pathways. Promotes phosphorylation of GSK3B at 'Ser-9' and CTTN. Promotes epithelial cell spreading. The protein is Interleukin-22 (Il22) of Mus musculus (Mouse).